The primary structure comprises 371 residues: Chaperone protein DnaJ (371 aa).

A J domain is found at 5–69; it reads DYYEVLGLSK…QKRAQYDQFG (65 aa). Residues 133 to 215 form a CR-type zinc finger; that stretch reads GKELNVEIPV…CHGSGKVRKR (83 aa). Zn(2+) is bound by residues Cys-146, Cys-149, Cys-163, Cys-166, Cys-189, Cys-192, Cys-203, and Cys-206. CXXCXGXG motif repeat units follow at residues 146–153, 163–170, 189–196, and 203–210; these read CDTCKGSG, CKHCSGSG, CSHCSGTG, and CTTCHGSG.

Belongs to the DnaJ family. As to quaternary structure, homodimer. Zn(2+) serves as cofactor.

It localises to the cytoplasm. Its function is as follows. Participates actively in the response to hyperosmotic and heat shock by preventing the aggregation of stress-denatured proteins and by disaggregating proteins, also in an autonomous, DnaK-independent fashion. Unfolded proteins bind initially to DnaJ; upon interaction with the DnaJ-bound protein, DnaK hydrolyzes its bound ATP, resulting in the formation of a stable complex. GrpE releases ADP from DnaK; ATP binding to DnaK triggers the release of the substrate protein, thus completing the reaction cycle. Several rounds of ATP-dependent interactions between DnaJ, DnaK and GrpE are required for fully efficient folding. Also involved, together with DnaK and GrpE, in the DNA replication of plasmids through activation of initiation proteins. The protein is Chaperone protein DnaJ of Bacillus anthracis (strain A0248).